A 42-amino-acid polypeptide reads, in one-letter code: Photosystem I reaction center subunit IX (42 aa).

Residues 7 to 27 (YLSVAPVLSTLWFGSLAGLLI) traverse the membrane as a helical segment.

Belongs to the PsaJ family.

It localises to the plastid. The protein resides in the chloroplast thylakoid membrane. Functionally, may help in the organization of the PsaE and PsaF subunits. This is Photosystem I reaction center subunit IX from Lepidium virginicum (Virginia pepperweed).